The chain runs to 156 residues: Putative pre-16S rRNA nuclease (156 aa).

Belongs to the YqgF nuclease family.

Its subcellular location is the cytoplasm. Could be a nuclease involved in processing of the 5'-end of pre-16S rRNA. This chain is Putative pre-16S rRNA nuclease, found in Streptomyces avermitilis (strain ATCC 31267 / DSM 46492 / JCM 5070 / NBRC 14893 / NCIMB 12804 / NRRL 8165 / MA-4680).